The following is a 432-amino-acid chain: Tyrosine--tRNA ligase (432 aa).

Tyr-35 is an L-tyrosine binding site. Positions 40–49 (PTAGSLHVGH) match the 'HIGH' region motif. Positions 175 and 179 each coordinate L-tyrosine. The 'KMSKS' region motif lies at 239–243 (KFGKT). Lys-242 serves as a coordination point for ATP. The S4 RNA-binding domain maps to 365–422 (PPLVDLFASTGLVPSKSAARRTIQEGGAYLNNAKVTDIEARVSEADLLHGRYLVLRRG).

The protein belongs to the class-I aminoacyl-tRNA synthetase family. TyrS type 1 subfamily. As to quaternary structure, homodimer.

It localises to the cytoplasm. The enzyme catalyses tRNA(Tyr) + L-tyrosine + ATP = L-tyrosyl-tRNA(Tyr) + AMP + diphosphate + H(+). Catalyzes the attachment of tyrosine to tRNA(Tyr) in a two-step reaction: tyrosine is first activated by ATP to form Tyr-AMP and then transferred to the acceptor end of tRNA(Tyr). The polypeptide is Tyrosine--tRNA ligase (Thermobifida fusca (strain YX)).